Reading from the N-terminus, the 446-residue chain is tRNA-2-methylthio-N(6)-dimethylallyladenosine synthase (446 aa).

An MTTase N-terminal domain is found at 3 to 124 (KKLYIKTYGC…LPELISKVVR (122 aa)). 6 residues coordinate [4Fe-4S] cluster: C12, C48, C87, C162, C166, and C169. In terms of domain architecture, Radical SAM core spans 148–380 (YPQGASSFIS…QKELAAQQLA (233 aa)). Residues 383-446 (ESCIGSTMKV…LNSLSGEIYR (64 aa)) form the TRAM domain.

This sequence belongs to the methylthiotransferase family. MiaB subfamily. Monomer. [4Fe-4S] cluster is required as a cofactor.

It is found in the cytoplasm. It catalyses the reaction N(6)-dimethylallyladenosine(37) in tRNA + (sulfur carrier)-SH + AH2 + 2 S-adenosyl-L-methionine = 2-methylsulfanyl-N(6)-dimethylallyladenosine(37) in tRNA + (sulfur carrier)-H + 5'-deoxyadenosine + L-methionine + A + S-adenosyl-L-homocysteine + 2 H(+). Catalyzes the methylthiolation of N6-(dimethylallyl)adenosine (i(6)A), leading to the formation of 2-methylthio-N6-(dimethylallyl)adenosine (ms(2)i(6)A) at position 37 in tRNAs that read codons beginning with uridine. This is tRNA-2-methylthio-N(6)-dimethylallyladenosine synthase from Rickettsia bellii (strain RML369-C).